Here is a 395-residue protein sequence, read N- to C-terminus: MDEEPERTKRWEGGYERTWEILKEDESGSLKATIEDILFKAKRKRVFEHHGQVRLGMMRHLYVVVDGSRTMEDQDLKPNRLTCTLKLLEYFVEEYFDQNPISQIGIIVTKSKRAEKLTELSGNPRKHITSLKKAVDMTCHGEPSLYNSLSMAMQTLKHMPGHTSREVLIIFSSLTTCDPSNIYDLIKSLKAAKIRVSIIGLSAEVRVCTALARETGGTYHVILDESHYKELLTHHVSPPPASSNSECSLIRMGFPQHTIASLSDQDAKPSFSMAHLDSNTEPGLTLGGYFCPQCRAKYCELPVECKICGLTLVSAPHLARSYHHLFPLDAFQEIPLEEHNGERFCYACQGELKDQHVYVCSVCQNVFCVDCDVFVHDSLHCCPGCIHKIPVPSGI.

The VWFA domain occupies 60–236; that stretch reads HLYVVVDGSR…HYKELLTHHV (177 aa). At tyrosine 95 the chain carries Phosphotyrosine. The segment at 291–308 adopts a C4-type zinc-finger fold; the sequence is CPQCRAKYCELPVECKIC.

It belongs to the GTF2H2 family. As to quaternary structure, component of the TFIID-containing RNA polymerase II pre-initiation complex that is composed of TBP and at least GTF2A1, GTF2A2, GTF2E1, GTF2E2, GTF2F1, GTF2H2, GTF2H3, GTF2H4, GTF2H5, GTF2B, TCEA1, ERCC2 and ERCC3. Component of the 7-subunit TFIIH core complex composed of XPB/ERCC3, XPD/ERCC2, GTF2H1, GTF2H2, GTF2H3, GTF2H4 and GTF2H5, which is active in NER. The core complex associates with the 3-subunit CDK-activating kinase (CAK) module composed of CCNH/cyclin H, CDK7 and MNAT1 to form the 10-subunit holoenzyme (holo-TFIIH) active in transcription. Interacts with XPB, XPD, GTF2H1 and GTF2H3.

It localises to the nucleus. In terms of biological role, component of the general transcription and DNA repair factor IIH (TFIIH) core complex, which is involved in general and transcription-coupled nucleotide excision repair (NER) of damaged DNA and, when complexed to CAK, in RNA transcription by RNA polymerase II. In NER, TFIIH acts by opening DNA around the lesion to allow the excision of the damaged oligonucleotide and its replacement by a new DNA fragment. In transcription, TFIIH has an essential role in transcription initiation. When the pre-initiation complex (PIC) has been established, TFIIH is required for promoter opening and promoter escape. Phosphorylation of the C-terminal tail (CTD) of the largest subunit of RNA polymerase II by the kinase module CAK controls the initiation of transcription. The N-terminus of GTF2H2 interacts with and regulates XPD whereas an intact C-terminus is required for a successful escape of RNAP II form the promoter. This Bos taurus (Bovine) protein is General transcription factor IIH subunit 2 (GTF2H2).